Reading from the N-terminus, the 303-residue chain is MTAEHDAAILPKPGGPLAVGKRATPEPGPNDVLIEVKAVALNPCDYYQRDYGMPPVPIYPAVIGGDAAGVVAKLGSSVTGGPVPGPGSRVIAFASSFYQNGSPDHGAFQKYALAQSEAVIPLPDNLSFEEGAVFPLAVLTALTAWTTIGIPLDTRYTPADKQAVLIWGASSSVGSFAVQSAKTLGFTVYATASPKHHELVKKLGADAVFDYKDSDVVSKIVDAVKKDGVYLHTAHCVVDGALQPTLDILKETKGDAFAKVAHSPVLPECHPTLDNTQITFNFPSMDEVVRTRISKLRRAVSRE.

The interval 1 to 26 (MTAEHDAAILPKPGGPLAVGKRATPE) is disordered. 44 to 49 (CDYYQR) provides a ligand contact to NADP(+). 136-143 (LAVLTALT) serves as a coordination point for substrate. NADP(+) contacts are provided by residues 170–173 (SSSV), 193–196 (SPKH), tyrosine 211, and 246–247 (LD). 265 to 269 (VLPEC) provides a ligand contact to substrate.

The protein belongs to the zinc-containing alcohol dehydrogenase family.

It functions in the pathway secondary metabolite biosynthesis. Trans-enoyl reductase; part of the gene cluster that mediates the biosynthesis of azaterrilone A and other azaphilones, a class of fungal metabolites characterized by a highly oxygenated pyrano-quinone bicyclic core and exhibiting a broad range of bioactivities. The first step of the pathway begins with the non-reducing polyketide synthase tazA that assembles one acetyl-CoA starter unit, five malonyl-CoA units, and catalyzes a series of Claisen condensations, methylation, PT-mediated cyclization, and finally releases the first hexaketide precursor through the R-domain. The tazA product then undergoes reduction on its terminal ketone and the following pyran-ring formation by yet undetermined enzyme(s). Dehydration and enoyl reduction, possibly involving the trans-enoyl reductase tazE leads to the next intermediate. TazD is predicted as an acetyltransferase and might catalyze the acetylation steps leading to the synthesis of azaterrilone A. Azaterrilone A is not the final product of the taz pathway and both the highly reducing polyketide synthase tazB and the dual enzyme tazHJ catalyze late steps of the pathway, leading to the production of the 2 final stereoisomers that contain additional polyketide modification whose structures have still to be determined. The chain is Trans-enoyl reductase tazE from Aspergillus terreus (strain NIH 2624 / FGSC A1156).